Consider the following 267-residue polypeptide: 14-3-3-like protein GF14 chi (267 aa).

Ala2 carries the N-acetylalanine modification. Phosphoserine occurs at positions 72 and 195. Position 216 is a phosphothreonine (Thr216). A Phosphoserine modification is found at Ser267.

Belongs to the 14-3-3 family. In terms of assembly, interacts with TPK1. Interacts with the isocitrate dehydrogenase IDH3, and malate dehydrogenases MDH1 and MDH2. Interacts with DREB1A and DREB1B in the nucleus. Interacts with CINV1.

Its subcellular location is the nucleus. The protein localises to the cytoplasm. Functionally, is associated with a DNA binding complex that binds to the G box, a well-characterized cis-acting DNA regulatory element found in plant genes. Involved in the regulation of nutrient metabolism. This chain is 14-3-3-like protein GF14 chi (GRF1), found in Arabidopsis thaliana (Mouse-ear cress).